The following is a 262-amino-acid chain: RNA-binding protein 7 (262 aa).

The residue at position 2 (G2) is an N-acetylglycine. An RRM domain is found at 10-87 (RTLFVGNLET…RPIKIQFRAG (78 aa)). ZCCHC8 binding stretches follow at residues 25–35 (LLFELFHQAGP) and 59–76 (HEVSVPYAMNLLNGIKLF). The tract at residues 95–121 (VSLSYPQHHVGNSSPTSTSPSRTVDNM) is disordered. Phosphoserine occurs at positions 133 and 134. The residue at position 149 (R149) is an Omega-N-methylarginine. 2 disordered regions span residues 159-212 (SPHL…HYSR) and 242-262 (SHDYDNRRDSGRNGKWRSSRH). Over residues 165-194 (SGFSPSAQSHNHTFNQSSSSQWRQDTPSSQ) the composition is skewed to polar residues. At S201 the chain carries Phosphoserine. Over residues 242 to 253 (SHDYDNRRDSGR) the composition is skewed to basic and acidic residues.

Component of the nuclear exosome targeting (NEXT) complex composed of MTREX, ZCCHC8, and RBM7 that directs a subset of non-coding short-lived RNAs for exosomal degradation. Interacts with ZCCHC8 and SF3B2/SAP145. Binds to MTREX through ZCCHC8. Interacts with YWHAE and YWHAZ; these interactions are stress-dependent and RBM7 phosphorylation dependent; release RNA from the NEXT complex and may affect RNA targeting to the nuclear RNA exosomome for degradation. Interacts with MEPCE and LARP7, the core subunits of 7SK snRNP; upon genotoxic stress this interaction is enhanced, triggering the release of inactive P-TEFb complex from the core and P-TEFb complex activation. In terms of processing, phosphorylated at Ser-133 by MAPK14/p38-alpha-activated MAPKAPK2/MK2; this phosphorylation is stress-dependent; this phosphorylation decreases its RNA-binding capacity therefore affecting RNA nuclear exosome-mediated degradation. This phosphorylation mediates YWHAE and YWHAZ interactions.

It localises to the nucleus. It is found in the nucleoplasm. Its function is as follows. RNA-binding subunit of the trimeric nuclear exosome targeting (NEXT) complex, a complex that functions as an RNA exosome cofactor that directs a subset of non-coding short-lived RNAs for exosomal degradation. NEXT is involved in surveillance and turnover of aberrant transcripts and non-coding RNAs. Binds preferentially polyuridine sequences and associates with newly synthesized RNAs, including pre-mRNAs and short-lived exosome substrates such as promoter upstream transcripts (PROMPTs), enhancer RNAs (eRNAs), and 3'-extended products from small nuclear RNAs (snRNAs). Participates in several biological processes including DNA damage response (DDR) and stress response. During stress response, activation of the p38MAPK-MK2 pathway decreases RBM7-RNA-binding and subsequently the RNA exosome degradation activities, thereby modulating the turnover of non-coding transcriptome. Participates in DNA damage response (DDR), through its interaction with MEPCE and LARP7, the core subunits of 7SK snRNP complex, that release the positive transcription elongation factor b (P-TEFb) complex from the 7SK snRNP. In turn, activation of P-TEFb complex induces the transcription of P-TEFb-dependent DDR genes to promote cell viability. The sequence is that of RNA-binding protein 7 from Bos taurus (Bovine).